We begin with the raw amino-acid sequence, 175 residues long: Nudix hydrolase 25 (175 aa).

In terms of domain architecture, Nudix hydrolase spans 7-155; the sequence is GYRPNVGVCL…KRPTYEEVIK (149 aa). G40, E55, and E59 together coordinate Mn(2+). The Nudix box motif lies at 40-61; it reads GGIEDGEDPKSAAMRELQEETG.

It belongs to the Nudix hydrolase family. Mn(2+) serves as cofactor.

It catalyses the reaction P(1),P(4)-bis(5'-guanosyl) tetraphosphate + H2O = GMP + GTP + 2 H(+). Its function is as follows. Mediates the hydrolysis of diadenosine 5',5''-P(1)P(4) tetraphosphate (Ap(4)A), a signaling molecule involved in regulation of DNA replication and repair. This chain is Nudix hydrolase 25, found in Arabidopsis thaliana (Mouse-ear cress).